An 89-amino-acid chain; its full sequence is Cell division topological specificity factor (89 aa).

Belongs to the MinE family.

Prevents the cell division inhibition by proteins MinC and MinD at internal division sites while permitting inhibition at polar sites. This ensures cell division at the proper site by restricting the formation of a division septum at the midpoint of the long axis of the cell. This chain is Cell division topological specificity factor, found in Desulforudis audaxviator (strain MP104C).